Here is a 136-residue protein sequence, read N- to C-terminus: Large ribosomal subunit protein uL16c (136 aa).

It belongs to the universal ribosomal protein uL16 family. In terms of assembly, part of the 50S ribosomal subunit.

It is found in the plastid. The protein localises to the chloroplast. This chain is Large ribosomal subunit protein uL16c, found in Buxus microphylla (Littleleaf boxwood).